Here is a 430-residue protein sequence, read N- to C-terminus: Probable proton-coupled zinc antiporter SLC30A4 (430 aa).

Residues 1–113 (MAGPGAWKRL…LLKQRKVKTR (113 aa)) are Cytoplasmic-facing. At Ser-36 the chain carries Phosphoserine. Residues 114-134 (LTIAAVLYLLFMIGELVGGYM) form a helical membrane-spanning segment. Residues 135 to 143 (ANSLAIMTD) are Lumenal-facing. Residues 144-164 (ALHMLTDLSAIILTLLALWLS) traverse the membrane as a helical segment. Zn(2+)-binding residues include His-146 and Asp-150. Residues 165–178 (SKSPTRRFTFGFHR) are Cytoplasmic-facing. Residues 179–199 (LEVLSAMISVMLVYVLMGFLL) form a helical membrane-spanning segment. The Lumenal portion of the chain corresponds to 200–216 (YEAVQRTIHMNYEINGD). The chain crosses the membrane as a helical span at residues 217–237 (VMLITAAVGVAVNVIMGFLLN). Residues 238–275 (QSGHHHSHAHSHSLPSNSPSMVSSGHNHGQDSLAVRAA) lie on the Cytoplasmic side of the membrane. Residues 240–265 (GHHHSHAHSHSLPSNSPSMVSSGHNH) are zinc binding. The disordered stretch occupies residues 245 to 264 (HAHSHSLPSNSPSMVSSGHN). A compositionally biased stretch (low complexity) spans 249 to 263 (HSLPSNSPSMVSSGH). The chain crosses the membrane as a helical span at residues 276-296 (FVHALGDLVQSVGVLIAAYII). Residues His-278 and Asp-282 each contribute to the Zn(2+) site. Residues 297–311 (RFKPEYKIADPICTY) are Lumenal-facing. Residues 312–332 (IFSLLVAFTTFRIIWDTVVII) traverse the membrane as a helical segment. Topologically, residues 333–430 (LEGVPSHLNV…TCANCHSSST (98 aa)) are cytoplasmic.

The protein belongs to the cation diffusion facilitator (CDF) transporter (TC 2.A.4) family. SLC30A subfamily. As to quaternary structure, homodimerization could regulate efficiency for zinc transport. Interacts with TMEM163. Widely expressed. Highly expressed in the brain and in mammary epithelial cell lines.

It is found in the endosome membrane. The protein localises to the late endosome membrane. Its subcellular location is the lysosome membrane. It catalyses the reaction Zn(2+)(in) + 2 H(+)(out) = Zn(2+)(out) + 2 H(+)(in). Functionally, probable proton-coupled zinc ion antiporter mediating zinc import from cytoplasm potentially into the endocytic compartment. Controls zinc deposition in milk. This chain is Probable proton-coupled zinc antiporter SLC30A4, found in Mus musculus (Mouse).